The primary structure comprises 87 residues: Small ribosomal subunit protein uS15 (87 aa).

Belongs to the universal ribosomal protein uS15 family. Part of the 30S ribosomal subunit. Forms a bridge to the 50S subunit in the 70S ribosome, contacting the 23S rRNA.

In terms of biological role, one of the primary rRNA binding proteins, it binds directly to 16S rRNA where it helps nucleate assembly of the platform of the 30S subunit by binding and bridging several RNA helices of the 16S rRNA. Functionally, forms an intersubunit bridge (bridge B4) with the 23S rRNA of the 50S subunit in the ribosome. The protein is Small ribosomal subunit protein uS15 of Alkaliphilus metalliredigens (strain QYMF).